The primary structure comprises 292 residues: UDP-N-acetylenolpyruvoylglucosamine reductase (292 aa).

One can recognise an FAD-binding PCMH-type domain in the interval lysine 27 to glycine 188. Residue arginine 166 is part of the active site. Serine 217 functions as the Proton donor in the catalytic mechanism. The active site involves glutamate 288.

This sequence belongs to the MurB family. The cofactor is FAD.

Its subcellular location is the cytoplasm. The enzyme catalyses UDP-N-acetyl-alpha-D-muramate + NADP(+) = UDP-N-acetyl-3-O-(1-carboxyvinyl)-alpha-D-glucosamine + NADPH + H(+). It functions in the pathway cell wall biogenesis; peptidoglycan biosynthesis. Cell wall formation. The chain is UDP-N-acetylenolpyruvoylglucosamine reductase from Thermosipho melanesiensis (strain DSM 12029 / CIP 104789 / BI429).